Consider the following 133-residue polypeptide: uncharacterized protein (133 aa).

Helical transmembrane passes span 13–33 (FLLSVVGSGNSLSILNGLFLS) and 73–93 (FGNPLVTSLNIMYSLFYLLLL).

The protein resides in the membrane. This is an uncharacterized protein from Saccharomyces cerevisiae (strain ATCC 204508 / S288c) (Baker's yeast).